Consider the following 1014-residue polypeptide: EMILIN-1-A (1014 aa).

The first 27 residues, 1 to 27 (MALYFVYLSTLLALILLGDNWAAGTYA), serve as a signal peptide directing secretion. Residues 53–128 (HRNWCAYVVT…HGYSGDDCSD (76 aa)) enclose the EMI domain. Disulfide bonds link cysteine 57–cysteine 118, cysteine 84–cysteine 89, and cysteine 117–cysteine 126. Disordered regions lie at residues 125–150 (DCSD…SDSD) and 811–869 (QDFT…ANVP). Basic and acidic residues predominate over residues 134–150 (HDSRARPTGEEGRSDSD). Residues 145 to 179 (GRSDSDRIRQLEEQIQSLNKNLHNLQKKIYEESQR) adopt a coiled-coil conformation. The 51-residue stretch at 815–865 (GPPGLPGPQGEKGSKGPPGPRGPLGKEGPQGRVGPVGPPGLRGEQGPPGKD) folds into the Collagen-like domain. Residues 840–856 (KEGPQGRVGPVGPPGLR) are compositionally biased toward low complexity. The C1q domain occupies 866–1012 (ANVPRLSFSA…GMLLYEESED (147 aa)).

The protein resides in the secreted. It localises to the extracellular space. Its subcellular location is the extracellular matrix. In terms of biological role, may be responsible for anchoring smooth muscle cells to elastic fibers, and may be involved not only in the formation of the elastic fiber, but also in the processes that regulate vessel assembly. Has cell adhesive capacity. This chain is EMILIN-1-A, found in Danio rerio (Zebrafish).